The sequence spans 179 residues: Large ribosomal subunit protein uL6 (179 aa).

This sequence belongs to the universal ribosomal protein uL6 family. In terms of assembly, part of the 50S ribosomal subunit.

In terms of biological role, this protein binds to the 23S rRNA, and is important in its secondary structure. It is located near the subunit interface in the base of the L7/L12 stalk, and near the tRNA binding site of the peptidyltransferase center. This is Large ribosomal subunit protein uL6 from Methylacidiphilum infernorum (isolate V4) (Methylokorus infernorum (strain V4)).